The chain runs to 1101 residues: Serine/threonine-protein kinase PSK2 (1101 aa).

Residue T118 is modified to Phosphothreonine. The Protein kinase domain occupies 841–1099 (FTILQVMGEG…IDEIYEDKWL (259 aa)). Residues 847-855 (MGEGAYGKV) and K870 each bind ATP. The Proton acceptor role is filled by D975.

The protein belongs to the protein kinase superfamily. Ser/Thr protein kinase family.

It is found in the cytoplasm. It catalyses the reaction L-seryl-[protein] + ATP = O-phospho-L-seryl-[protein] + ADP + H(+). The catalysed reaction is L-threonyl-[protein] + ATP = O-phospho-L-threonyl-[protein] + ADP + H(+). Its function is as follows. Serine/threonine-protein kinase involved in the control of sugar metabolism and translation. Phosphorylates UGP1, which is required for normal glycogen and beta-(1,6)-glucan synthesis. This phosphorylation shifts glucose partitioning toward cell wall glucan synthesis at the expense of glycogen synthesis. Also phosphorylates the glycogen synthase GSY2 and the translation factors CAF20, TIF11 and SRO9. The sequence is that of Serine/threonine-protein kinase PSK2 (PSK2) from Saccharomyces cerevisiae (strain ATCC 204508 / S288c) (Baker's yeast).